We begin with the raw amino-acid sequence, 155 residues long: 17.6 kDa class I heat shock protein 1 (155 aa).

Residues 39–154 enclose the sHSP domain; it reads SSSAIANARV…KAQVKSIDIS (116 aa).

The protein belongs to the small heat shock protein (HSP20) family. Forms oligomeric structures. Binds to AKR2A.

It localises to the cytoplasm. Its function is as follows. Possesses chaperone activity. This is 17.6 kDa class I heat shock protein 1 (HSP17.6A) from Arabidopsis thaliana (Mouse-ear cress).